A 178-amino-acid polypeptide reads, in one-letter code: Probable coatomer subunit zeta-B (178 aa).

Belongs to the adaptor complexes small subunit family. Oligomeric complex that consists of at least the alpha, beta, beta', gamma, delta, epsilon and zeta subunits.

It is found in the cytoplasm. The protein localises to the golgi apparatus membrane. It localises to the cytoplasmic vesicle. The protein resides in the COPI-coated vesicle membrane. The coatomer is a cytosolic protein complex that binds to dilysine motifs and reversibly associates with Golgi non-clathrin-coated vesicles, which further mediate biosynthetic protein transport from the ER, via the Golgi up to the trans Golgi network. Coatomer complex is required for budding from Golgi membranes, and is essential for the retrograde Golgi-to-ER transport of dilysine-tagged proteins. The zeta subunit may be involved in regulating the coat assembly and, hence, the rate of biosynthetic protein transport due to its association-dissociation properties with the coatomer complex. This is Probable coatomer subunit zeta-B (copZb) from Dictyostelium discoideum (Social amoeba).